Consider the following 79-residue polypeptide: Transcriptional regulator SplA (79 aa).

Functionally, regulator of the spore photoproduct lyase operon (splAB). The sequence is that of Transcriptional regulator SplA (splA) from Bacillus subtilis (strain 168).